The chain runs to 470 residues: 3-isopropylmalate dehydratase large subunit (470 aa).

[4Fe-4S] cluster-binding residues include C349, C410, and C413.

The protein belongs to the aconitase/IPM isomerase family. LeuC type 1 subfamily. As to quaternary structure, heterodimer of LeuC and LeuD. [4Fe-4S] cluster is required as a cofactor.

It catalyses the reaction (2R,3S)-3-isopropylmalate = (2S)-2-isopropylmalate. It participates in amino-acid biosynthesis; L-leucine biosynthesis; L-leucine from 3-methyl-2-oxobutanoate: step 2/4. Functionally, catalyzes the isomerization between 2-isopropylmalate and 3-isopropylmalate, via the formation of 2-isopropylmaleate. This chain is 3-isopropylmalate dehydratase large subunit, found in Nitrosomonas europaea (strain ATCC 19718 / CIP 103999 / KCTC 2705 / NBRC 14298).